The following is a 1401-amino-acid chain: Lysine-specific demethylase 6A (1401 aa).

Residues 1–1095 are interaction with SUPT6H; it reads MKSCGVSLAT…TNIDLSDDKK (1095 aa). TPR repeat units follow at residues 93–126, 130–163, 170–199, 205–238, 250–283, 284–317, 318–351, and 352–385; these read SDFFCQLGHFNLLLEDYPKALSAYQRYYSLQSDY, AAFLYGLGLVYFHYNAFQWAIKAFQEVLYVDPSF, HLRLGLMFKVNTDYESSLKHFQLALVDCNP, AEIQFHIAHLYETQRKYHSAKEAYEQLLQTENLS, GWMHHTVDLLGDKATKESYAIQYLQKSLEADPNS, GQSWYFLGRCYSSIGKVQDAFISYRQSIDKSEAS, ADTWCSIGVLYQQQNQPMDALQAYICAVQLDHGH, and AAAWMDLGTLYESCNQPQDAIKCYLNATRSKSCS. Positions 437–449 are enriched in polar residues; that stretch reads AMNTAQQNTSDNW. Residues 437-457 form a disordered region; the sequence is AMNTAQQNTSDNWSGGHAVSH. Arginine 519 is subject to Omega-N-methylarginine. A disordered region spans residues 521-541; it reads TGIPNGPTADSSLPTNSVSGQ. Arginine 549 is subject to Omega-N-methylarginine. 2 stretches are compositionally biased toward polar residues: residues 624–652 and 660–724; these read LTSSAEEPWKNQLSNSTQGLHKGQSSHSA and LSST…SGNI. Disordered stretches follow at residues 624 to 746, 758 to 778, 810 to 864, 914 to 940, and 1043 to 1079; these read LTSS…SVEG, AVCSPSHGDSKSPGLLSSDNP, KTDN…ESQS, LLDKCPPPRPPSSPYPPLPKDKLNPPT, and FQESLREENEKRSHHKDHSDSESTSSDNSGRRRKGPF. Serine 769 carries the phosphoserine modification. Low complexity predominate over residues 814-833; sequence SVASSPSSAISTATPSPKST. Threonine 827 carries the phosphothreonine modification. At serine 829 the chain carries Phosphoserine. The span at 834–848 shows a compositional bias: polar residues; that stretch reads EQTTTNSVTSLNSPH. Over residues 918-931 the composition is skewed to pro residues; that stretch reads CPPPRPPSSPYPPL. A compositionally biased stretch (basic and acidic residues) spans 1046 to 1063; the sequence is SLREENEKRSHHKDHSDS. The region spanning 1095–1258 is the JmjC domain; the sequence is KWKLQLHELT…YKLAVERYEW (164 aa). 3 residues coordinate Fe cation: histidine 1146, glutamate 1148, and histidine 1226. Zn(2+) is bound by residues cysteine 1331, cysteine 1334, cysteine 1358, and cysteine 1361.

This sequence belongs to the UTX family. As to quaternary structure, interacts with TLE1. Component of the MLL2/3 complex (also named ASCOM complex), at least composed of KMT2D/MLL2 or KMT2C/MLL3, ASH2L, RBBP5, WDR5, NCOA6, DPY30, KDM6A (or KDM6B), PAXIP1/PTIP, PAGR1 and alpha- and beta-tubulin. Interacts with SUPT6H. Interacts with SMARCA4. Interacts with PROSER1. L-ascorbate serves as cofactor. The cofactor is Fe(2+).

The protein localises to the nucleus. The catalysed reaction is N(6),N(6),N(6)-trimethyl-L-lysyl(27)-[histone H3] + 2 2-oxoglutarate + 2 O2 = N(6)-methyl-L-lysyl(27)-[histone H3] + 2 formaldehyde + 2 succinate + 2 CO2. Histone demethylase that specifically demethylates 'Lys-27' of histone H3, thereby playing a central role in histone code. Demethylates trimethylated and dimethylated but not monomethylated H3 'Lys-27'. Plays a central role in regulation of posterior development, by regulating HOX gene expression. Demethylation of 'Lys-27' of histone H3 is concomitant with methylation of 'Lys-4' of histone H3, and regulates the recruitment of the PRC1 complex and monoubiquitination of histone H2A. Plays a demethylase-independent role in chromatin remodeling to regulate T-box family member-dependent gene expression. The protein is Lysine-specific demethylase 6A (KDM6A) of Homo sapiens (Human).